We begin with the raw amino-acid sequence, 343 residues long: Cytoplasmic tRNA 2-thiolation protein 1 (343 aa).

The protein belongs to the TtcA family. CTU1/NCS6/ATPBD3 subfamily.

It localises to the cytoplasm. It functions in the pathway tRNA modification; 5-methoxycarbonylmethyl-2-thiouridine-tRNA biosynthesis. In terms of biological role, plays a central role in 2-thiolation of mcm(5)S(2)U at tRNA wobble positions of tRNA(Lys), tRNA(Glu) and tRNA(Gln). Directly binds tRNAs and probably acts by catalyzing adenylation of tRNAs, an intermediate required for 2-thiolation. It is unclear whether it acts as a sulfurtransferase that transfers sulfur from thiocarboxylated URM1 onto the uridine of tRNAs at wobble position. This Drosophila melanogaster (Fruit fly) protein is Cytoplasmic tRNA 2-thiolation protein 1.